The chain runs to 64 residues: Large ribosomal subunit protein bL35 (64 aa).

The segment covering Met1 to Arg26 has biased composition (basic residues). 2 disordered regions span residues Met1–Tyr28 and Phe33–Ser52.

The protein belongs to the bacterial ribosomal protein bL35 family.

The polypeptide is Large ribosomal subunit protein bL35 (Exiguobacterium sibiricum (strain DSM 17290 / CCUG 55495 / CIP 109462 / JCM 13490 / 255-15)).